Reading from the N-terminus, the 1114-residue chain is OTU domain-containing protein 4 (1114 aa).

M1 bears the N-acetylmethionine mark. The segment at 1–22 (MEAAVGVPDGGDQGGAGPREDA) is disordered. A compositionally biased stretch (gly residues) spans 8 to 17 (PDGGDQGGAG). Residues 34 to 155 (LYRKLVAKDG…GNHYDIVYPI (122 aa)) enclose the OTU domain. The interval 39–45 (VAKDGSC) is cys-loop. D42 is an active-site residue. The Nucleophile role is filled by C45. A variable-loop region spans residues 94-104 (LENPQEWVGQV). Residue Y120 is modified to Phosphotyrosine. S126 and S128 each carry phosphoserine. T131 is subject to Phosphothreonine. Residues 143-148 (FSNGNH) are his-loop. H148 is an active-site residue. Phosphoserine occurs at positions 166, 199, 202, 204, and 341. The interval 323–449 (KHTSKNLKAP…FGLSPEERRE (127 aa)) is disordered. The span at 392-404 (FSSHSSGSQSQKF) shows a compositional bias: low complexity. The span at 420-435 (RKPDRERVEDFDHTSR) shows a compositional bias: basic and acidic residues. A Phosphotyrosine modification is found at Y439. Residue S443 is modified to Phosphoserine. The residue at position 460 (Y460) is a Phosphotyrosine. The segment at 472–567 (ALSSSSVNQS…PAEQKPAEHV (96 aa)) is disordered. The segment covering 474–487 (SSSSVNQSASQSSN) has biased composition (low complexity). Residues 496–529 (HVGDRKGSRRRMDTEERKDKDSIHGHSQLDKRPE) are compositionally biased toward basic and acidic residues. S546, S893, and S900 each carry phosphoserine. The tract at residues 911–1114 (EFPEARGEHV…MGDGHRGQHT (204 aa)) is disordered. 2 stretches are compositionally biased toward basic and acidic residues: residues 913–922 (PEARGEHVHS) and 969–1000 (NRER…DPKT). 5 positions are modified to phosphoserine: S1006, S1011, S1014, S1023, and S1024. Residues 1039–1048 (SKQFYNQTYG) are compositionally biased toward polar residues. Phosphoserine is present on S1049. Composition is skewed to basic and acidic residues over residues 1067-1086 (VRSE…EGYQ) and 1096-1114 (FRGD…GQHT).

In terms of assembly, interacts with MYD88; the interaction is direct. Interacts with ALKBH3; the interaction is direct. Interacts with USP7; the interaction is direct. Interacts with USP9X; the interaction is direct. In terms of processing, phosphorylated on Ser-202 and Ser-204 likely by CSNK2A1-CSNK2A2 serine/threonine-protein kinase complex. Activates 'Lys-63'-specific deubiquitinase activity.

It localises to the cytoplasm. The protein resides in the nucleus. It catalyses the reaction Thiol-dependent hydrolysis of ester, thioester, amide, peptide and isopeptide bonds formed by the C-terminal Gly of ubiquitin (a 76-residue protein attached to proteins as an intracellular targeting signal).. With respect to regulation, phosphorylation on Ser-202 and Ser-204 induces 'Lys-63'-specific deubiquitinase activity. Deubiquitinase which hydrolyzes the isopeptide bond between the ubiquitin C-terminus and the lysine epsilon-amino group of the target protein. May negatively regulate inflammatory and pathogen recognition signaling in innate immune response. Upon phosphorylation at Ser-202 and Ser-204 residues, via IL-1 receptor and Toll-like receptor signaling pathway, specifically deubiquitinates 'Lys-63'-polyubiquitinated MYD88 adapter protein triggering down-regulation of NF-kappa-B-dependent transcription of inflammatory mediators. Independently of the catalytic activity, acts as a scaffold for alternative deubiquitinases to assemble specific deubiquitinase-substrate complexes. Associates with USP7 and USP9X deubiquitinases to stabilize alkylation repair enzyme ALKBH3, thereby promoting the repair of alkylated DNA lesions. The protein is OTU domain-containing protein 4 of Homo sapiens (Human).